A 333-amino-acid chain; its full sequence is NADH-quinone oxidoreductase subunit H (333 aa).

A run of 8 helical transmembrane segments spans residues 15–35, 88–108, 117–137, 159–179, 191–211, 239–259, 274–296, and 313–333; these read FFIFFGLAVLLLFAVLGFVTY, FILAPVIAFAPAFMVLAVIPF, IGVGLLYYIAVSGITTIGVVT, ISYEIPLVMSVIGIVLLAGSL, VWYIFVQPIGFVVFLIAAVAE, WAFFMLSEYVYFFGMASLITV, IPGAVWFALKFSSVVFLLIWFRV, and VLLPIALANIFLTALIKELFF.

It belongs to the complex I subunit 1 family. In terms of assembly, NDH-1 is composed of 14 different subunits. Subunits NuoA, H, J, K, L, M, N constitute the membrane sector of the complex.

Its subcellular location is the cell membrane. The enzyme catalyses a quinone + NADH + 5 H(+)(in) = a quinol + NAD(+) + 4 H(+)(out). NDH-1 shuttles electrons from NADH, via FMN and iron-sulfur (Fe-S) centers, to quinones in the respiratory chain. The immediate electron acceptor for the enzyme in this species is believed to be ubiquinone. Couples the redox reaction to proton translocation (for every two electrons transferred, four hydrogen ions are translocated across the cytoplasmic membrane), and thus conserves the redox energy in a proton gradient. This subunit may bind ubiquinone. The sequence is that of NADH-quinone oxidoreductase subunit H from Bacillus anthracis (strain A0248).